Here is a 355-residue protein sequence, read N- to C-terminus: Phosphoribosylformylglycinamidine cyclo-ligase (355 aa).

It belongs to the AIR synthase family.

It localises to the cytoplasm. The enzyme catalyses 2-formamido-N(1)-(5-O-phospho-beta-D-ribosyl)acetamidine + ATP = 5-amino-1-(5-phospho-beta-D-ribosyl)imidazole + ADP + phosphate + H(+). It participates in purine metabolism; IMP biosynthesis via de novo pathway; 5-amino-1-(5-phospho-D-ribosyl)imidazole from N(2)-formyl-N(1)-(5-phospho-D-ribosyl)glycinamide: step 2/2. The chain is Phosphoribosylformylglycinamidine cyclo-ligase from Beijerinckia indica subsp. indica (strain ATCC 9039 / DSM 1715 / NCIMB 8712).